The chain runs to 345 residues: DNA-directed RNA polymerases I and III subunit rpac1 (345 aa).

Residues Met-1–Ser-11 show a composition bias toward polar residues. The disordered stretch occupies residues Met-1–Thr-20.

Belongs to the archaeal Rpo3/eukaryotic RPB3 RNA polymerase subunit family. In terms of assembly, component of the RNA polymerase I (Pol I) and RNA polymerase III (Pol III) complexes consisting of at least 13 and 17 subunits, respectively. Interacts with RPAC19/RPAC2.

It localises to the nucleus. In terms of biological role, DNA-dependent RNA polymerase catalyzes the transcription of DNA into RNA using the four ribonucleoside triphosphates as substrates. Common component of RNA polymerases I and III which synthesize ribosomal RNA precursors and small RNAs, such as 5S rRNA and tRNAs, respectively. RPAC1 is part of the Pol core element with the central large cleft and probably a clamp element that moves to open and close the cleft. The sequence is that of DNA-directed RNA polymerases I and III subunit rpac1 (polr1c) from Dictyostelium discoideum (Social amoeba).